Consider the following 1594-residue polypeptide: MIPHSSAGVQSWGHPLRAVNNGSGHVDASQAVGPPDPQFEKLPTPVPQPQPRQPAVIDLTTSGGDAQELEPPPKRLRLDLPAAPSARDASPAPGSGGELRSTPGTGGSKPPSLSWRNRPVWSFQAMLSEVPGSNVMNEEDATAVAQGGKPASPPSLPVLPWKYIPESLGSNPTTSRASSPVKEVQTIPYRIETPSVAPVLKGEKVADFSPWIGNHPEDVLNEQTAKQGHYDRTQVSQNESNTARPSLYAQLKHRSGLQMLSSVFAAALEKRQNHSLVTAPSTFKPPPRVTLTDNKREAWLRDLANPSVPLRKLSRTIPHGIRGKALLDQCLNKGIPVNRAVWLAKCVGANEIRAFKRKGTSGTLALGLEAKWVRDWTASVQQFLEGVLGACGSAQWKMKMTYAVSLTARLFFERLLDHDQYLGWFLSSLEAAPVNIVPVWLLMLGIYWDNIMRYRKRGRRLAELLLVKLRQVTQPDKGGPLQPLVDRLSLYVRRLVLEHTSSVVLPGSWENHKELISSCLNLKDNVHKTIYQNLSERNSRLQLPKNHQDTAERSPQQRVIQLFDSIRSAHDISSASTACLKTIEDKAILISKLLEWTATPFRYGLCRVYTGVRLLRKWKMSGIDVDSYILSFLADVRVTSALNMENIYHIISELVRSQTFSVGRYLQWLMAKGVTNTPQPVPSDLCLLKQLPANRLPEHVRNLRNTLLYRAGIPVMEEDSAIAELKISIAQRLPNIFGAEMDSAMPTESSQPHPTWAVKSEIGQWIRHGIAGHCRDSPRYVYLLSRSTAPANNYRKLSGVSVAVDPGASALTPDEFYSVREILETFGDLSMLADILKQATRCDDDVVLASVADTVNCHFDCFCVIGATADLFRGLVESYARLKRLGNASLDLLFSLIELGLRIPSEFNTVALLRQDLTRLENKSALAAPSPLSDSIPLALSDVDPSFQEKLNQLLSSGGGMDESTMDTVFYSLMHILENSGSPAKLSANETARYLAYLRPFQPKHFDTMLIRWICGLLKSSTPSMSRILPPLIGVGCVTIHAFVFLVKKLLQSEKVAAVIPNLAGLRVDLLQLLVPLVSGKSKYADLVTYRFHVAQQEFFMKHPQETLDIICDAVALVNSETGSNPGQPDIAGCATELLDILLTQNPEVTVQYCLQGFIGKHSTSTTVLERALDNLLGFDSLAGPPTMSEAEKVVRMTDDFSLPFCQLKLQMLFNAESGRNVGNGIVDVMFKAAVEDTRSKGSNWVGFVGLMSQDIIRQVWKHHYHYKNLEAHGHPGTAKSLETAKLYLTIIEKLAYSVPEAGVQSVAPILVEKMDLLLHRLVIMQTNFNNVTMNRHGAATTQILQSRSNFERSLAFWFSAFLRMIVIHRSAFTMPSPAPRANGLQEQSRLLISILCISLARLPDSVIRLFPAADYFPHPIPSQGYRPCPGILLQTHALDVAASLIDTFPDEARQQCARFLKEKCPPFLQYQNDSRFIYLLGPMSDAAALNSLQAASLPSPAAGGSTPTPTPSSALPGAPSNPQPTAMTPAVTSASLSEGINCVASHLRLQYRGRAMGPYPVRPWELLEDAAPIVGVNDTAVNLKYFDARRVRA.

Disordered regions lie at residues 1–116 and 1499–1532; these read MIPH…LSWR and PSPA…TPAV. Composition is skewed to low complexity over residues 81–93 and 1499–1521; these read PAAP…SPAP and PSPA…GAPS.

It belongs to the Mediator complex subunit 12 family. As to quaternary structure, component of the srb8-11 complex, which itself associates with the Mediator complex.

It is found in the nucleus. In terms of biological role, component of the srb8-11 complex. The srb8-11 complex is a regulatory module of the Mediator complex which is itself involved in regulation of basal and activated RNA polymerase II-dependent transcription. The srb8-11 complex may be involved in the transcriptional repression of a subset of genes regulated by Mediator. It may inhibit the association of the Mediator complex with RNA polymerase II to form the holoenzyme complex. This chain is Mediator of RNA polymerase II transcription subunit 12 (srb8), found in Aspergillus oryzae (strain ATCC 42149 / RIB 40) (Yellow koji mold).